The primary structure comprises 585 residues: Cytochrome P450 monooxygenase AOL_s00215g278 (585 aa).

Residue Cys518 coordinates heme.

This sequence belongs to the cytochrome P450 family. Heme serves as cofactor.

It functions in the pathway secondary metabolite biosynthesis; terpenoid biosynthesis. Cytochrome P450 monooxygenase; part of the gene cluster that mediates the biosynthesis of sesquiterpenyl epoxy-cyclohexenoids (SECs) such as anthrobotrisins and arthrosporols, metabolites that possess a novel hybrid carbon skeleton consisting of a polyketide-derived epoxycyclohexenol combined with a terpenoid-derived monocyclic sesquiterpenol substructure (PKS-PTS hybrid). The SEC pathway plays an important role for fungal soil colonization via decreasing fungal nematode-capturing ability. Within the pathway, the cytochrome P450 monooxygenase AOL_s00215g278 plays a role in the oxygenation of the phenol moiety, most likely in the epoxy formation. The pathway begins with the biosynthesis of 6-methylsalicylic acid (6-MSA), the first precursor of the polyketide-derived epoxycyclohexenol in arthrosporols, by the polyketide synthase (PKS) AOL_s00215g283 via condensation of 1 acetate and 3 malonate units. The 6-methylsalicylic acid decarboxylase AOL_s00215g281 then catalyzes the decarboxylation of 6-methylsalicylic acid to yield m-cresol. The cytochrome P450 monooxygenase AOL_s00215g282 further oxidizes m-cresol to yield toluquinol. With the assistance of the oxidoreductase AOL_s00215g277, the polyprenyl transferase AOL_s00215g276 catalyzes the farnesylation of toluquinol to produce farnesyl hydroquinone, the hybrid precursor for biosynthesis of SECs. Farnesyl hydroquinone undergoes epoxidation and then subsequent dehydrogenation to form farnesyl epoxy-quinone, the first and simplest SEC. The cytochrome P450 monooxygenase AOL_s00215g278 and the FAD-dependent monooxygenase AOL_s00215g279 might be involved in the oxygenation of the phenol moiety, most likely in the epoxy formation. The cytochrome P450 monooxygenases AOL_s00215g274 and AOL_s00215g280 are involved in specific regional ketone reductions at respectively C-4 and C-1 of farnesyl epoxy-quinone PubMed:33823587. The polypeptide is Cytochrome P450 monooxygenase AOL_s00215g278 (Arthrobotrys oligospora (strain ATCC 24927 / CBS 115.81 / DSM 1491) (Nematode-trapping fungus)).